We begin with the raw amino-acid sequence, 65 residues long: Large ribosomal subunit protein bL35 (65 aa).

Residues 1–15 are compositionally biased toward basic residues; the sequence is MPKMKTKKSAAKRFQ. The tract at residues 1–26 is disordered; that stretch reads MPKMKTKKSAAKRFQVRGSGSIKRGQ.

The protein belongs to the bacterial ribosomal protein bL35 family.

The chain is Large ribosomal subunit protein bL35 from Bordetella avium (strain 197N).